A 508-amino-acid chain; its full sequence is Polyamine oxidase FMS1 (508 aa).

This sequence belongs to the flavin monoamine oxidase family. Requires FAD as cofactor.

The catalysed reaction is spermine + O2 + H2O = 3-aminopropanal + spermidine + H2O2. It catalyses the reaction spermidine + O2 + H2O = 3-aminopropanal + putrescine + H2O2. It carries out the reaction N(1)-acetylspermine + O2 + H2O = 3-acetamidopropanal + spermidine + H2O2. The enzyme catalyses N(1)-acetylspermidine + O2 + H2O = 3-acetamidopropanal + putrescine + H2O2. The catalysed reaction is N(8)-acetylspermidine + O2 + H2O = 4-acetamidobutanal + propane-1,3-diamine + H2O2. Functionally, involved in the production of beta-alanine, a precursor of pantothenic acid. Multicopy suppressor of fenpropimorph resistance. The sequence is that of Polyamine oxidase FMS1 (FMS1) from Saccharomyces cerevisiae (strain ATCC 204508 / S288c) (Baker's yeast).